The primary structure comprises 185 residues: 4-nitrophenol 4-monooxygenase/4-nitrocatechol 2-monooxygenase, reductase component (185 aa).

It belongs to the non-flavoprotein flavin reductase family. The 4-NP/4-NCA monooxygenase is composed of an oxygenase component NpcA and a reductase component NpcB.

It carries out the reaction 4-nitrophenol + NADH + O2 + H(+) = 4-nitrocatechol + NAD(+) + H2O. The catalysed reaction is 4-nitrocatechol + NADPH + O2 = 2-hydroxy-1,4-benzoquinone + nitrite + NADP(+) + H2O. It catalyses the reaction 4-nitrocatechol + NADH + O2 = 2-hydroxy-1,4-benzoquinone + nitrite + NAD(+) + H2O. Its pathway is aromatic compound metabolism. It participates in xenobiotic degradation. Inhibited by methimazole. Its function is as follows. Involved in the degradation of para-nitrophenol (4-NP). Catalyzes both the initial hydroxylation of 4-NP to produce 4-nitrocatechol (4-NCA) and the subsequent oxidative release of the nitro group from 4-NCA to produce 2-hydroxy-1,4-benzoquinone. It can also use 4-nitroresorcinol as substrate with a rate of nitrite release similar to that observed with the two physiological substrates, 4-PN and 4-NCA. The polypeptide is 4-nitrophenol 4-monooxygenase/4-nitrocatechol 2-monooxygenase, reductase component (npcB) (Rhodococcus opacus (Nocardia opaca)).